We begin with the raw amino-acid sequence, 192 residues long: MDTSRLTLDHFLSRFQLLRPQMTHETLNQRQAAVLIPVVRRPQPGLLLTQRAIHLRKHAGQVAFPGGAVDSTDASLIAAALREAQEEVAIPPQAVEVIGVLPPVDSVTGFQVTPVVGIIPPNLPWRASEDEVSAVFEMPLAQALQLGRYHPLDVYRRGNSHRVWLSWYEHYFVWGMTANILRELALQIGVKP.

The 132-residue stretch at 29-160 (QRQAAVLIPV…PLDVYRRGNS (132 aa)) folds into the Nudix hydrolase domain. Positions 67–89 (GAVDSTDASLIAAALREAQEEVA) match the Nudix box motif. Mg(2+) is bound by residues glutamate 83 and glutamate 87.

This sequence belongs to the Nudix hydrolase family. PCD1 subfamily. The cofactor is Mn(2+). Mg(2+) serves as cofactor.

Probably mediates the hydrolysis of some nucleoside diphosphate derivatives. This is an uncharacterized protein from Salmonella choleraesuis (strain SC-B67).